Here is a 293-residue protein sequence, read N- to C-terminus: Homoserine kinase (293 aa).

An ATP-binding site is contributed by 83-93 (PITRGMGSSSA).

This sequence belongs to the GHMP kinase family. Homoserine kinase subfamily.

It is found in the cytoplasm. It carries out the reaction L-homoserine + ATP = O-phospho-L-homoserine + ADP + H(+). It participates in amino-acid biosynthesis; L-threonine biosynthesis; L-threonine from L-aspartate: step 4/5. In terms of biological role, catalyzes the ATP-dependent phosphorylation of L-homoserine to L-homoserine phosphate. The sequence is that of Homoserine kinase from Helicobacter pylori (strain J99 / ATCC 700824) (Campylobacter pylori J99).